We begin with the raw amino-acid sequence, 211 residues long: N-(5'-phosphoribosyl)anthranilate isomerase (211 aa).

The protein belongs to the TrpF family.

It catalyses the reaction N-(5-phospho-beta-D-ribosyl)anthranilate = 1-(2-carboxyphenylamino)-1-deoxy-D-ribulose 5-phosphate. The protein operates within amino-acid biosynthesis; L-tryptophan biosynthesis; L-tryptophan from chorismate: step 3/5. This Zymomonas mobilis subsp. mobilis (strain ATCC 31821 / ZM4 / CP4) protein is N-(5'-phosphoribosyl)anthranilate isomerase.